Here is a 1836-residue protein sequence, read N- to C-terminus: Druantia protein DruE (1836 aa).

Residues 108 to 405 (SFLGEDASDL…FAQDLTGLSP (298 aa)) enclose the Helicase ATP-binding domain. 121–128 (TGTGSGKT) is a binding site for ATP. Positions 347-350 (DEAH) match the DEAH box motif. In terms of domain architecture, Helicase C-terminal spans 1014 to 1199 (DCTALMPFAL…EVKVNNPKIA (186 aa)).

It localises to the cytoplasm. Its function is as follows. Component of antiviral defense system Druantia type I, composed of DruA, DruB, DruC, DruD and DruE. Expression of Druantia in E.coli (strain MG1655) confers resistance to phage lambda, SECphi18, SECphi27 and T4. This protein is probably a helicase. The sequence is that of Druantia protein DruE from Escherichia coli (strain UMEA 4076-1).